A 593-amino-acid chain; its full sequence is MTTGSALYIPPYKADDQDVVVELNNRFGPEAFTAQATRTGMPVLWVTRSKLVEVLTFLRNLPKPYVMLYDLHGVDERLRTKRQGLPGADFSVFYHLLSIERNSDVMIKVALSEGDLSLPTVTGIWPNANWYEREVWDMFGIDFAGHPHLSRIMMPPTWEGHPLRKDFPARATEFDPFSLNLAKQQLEEEAARFRPEDWGMKRSGANEDYMFLNLGPNHPSAHGAFRIILQLDGEEIVDCVPDIGYHHRGAEKMAERQSWHSFIPYTDRIDYLGGVMNNLPYVLSVEKLAGIKVPEKVDVIRIMMAEFFRITSHLLFLGTYIQDVGAMTPVFFTFTDRQRAYTVIEAITGFRLHPAWYRIGGVAHDLPRGWEKLVKDFVEWLPKRLDEYTKAALQNSILKGRTIGVAAYNTKEALEWGVTGAGLRSTGCDFDLRKARPYSGYENFEFEVPLAANGDAYDRCMVRVEEMRQSIKIIDQCLRNMPEGPYKADHPLTTPPPKERTLQHIETLITHFLQVSWGPVMPANESFQMIEATKGINSYYLTSDGGTMSYRTRIRTPSFAHLQQIPSVIRGSMVADLIAYLGSIDFVMADVDR.

An NADH dehydrogenase I subunit C region spans residues 1 to 184 (MTTGSALYIP…DPFSLNLAKQ (184 aa)). Positions 208 to 593 (DYMFLNLGPN…IDFVMADVDR (386 aa)) are NADH dehydrogenase I subunit D.

It in the N-terminal section; belongs to the complex I 30 kDa subunit family. In the C-terminal section; belongs to the complex I 49 kDa subunit family. In terms of assembly, NDH-1 is composed of 13 different subunits. Subunits NuoB, CD, E, F, and G constitute the peripheral sector of the complex.

Its subcellular location is the cell inner membrane. The enzyme catalyses a quinone + NADH + 5 H(+)(in) = a quinol + NAD(+) + 4 H(+)(out). In terms of biological role, NDH-1 shuttles electrons from NADH, via FMN and iron-sulfur (Fe-S) centers, to quinones in the respiratory chain. The immediate electron acceptor for the enzyme in this species is believed to be ubiquinone. Couples the redox reaction to proton translocation (for every two electrons transferred, four hydrogen ions are translocated across the cytoplasmic membrane), and thus conserves the redox energy in a proton gradient. The sequence is that of NADH-quinone oxidoreductase subunit C/D from Pseudomonas fluorescens (strain ATCC BAA-477 / NRRL B-23932 / Pf-5).